The following is a 232-amino-acid chain: Cobalt transport protein CbiM (232 aa).

The next 6 helical transmembrane spans lie at 6–26, 43–63, 84–104, 107–127, 135–155, and 181–201; these read GFLP…FVVH, LLLG…LPSV, IMAV…AHGG, TLGA…YGVY, VPLM…TYCV, and IFAV…VIVM.

The protein belongs to the CbiM family. Forms an energy-coupling factor (ECF) transporter complex composed of an ATP-binding protein (A component, CbiO), a transmembrane protein (T component, CbiQ) and 2 possible substrate-capture proteins (S components, CbiM and CbiN) of unknown stoichimetry.

The protein resides in the cell membrane. The protein operates within cofactor biosynthesis; adenosylcobalamin biosynthesis. Functionally, part of the energy-coupling factor (ECF) transporter complex CbiMNOQ involved in cobalt import. This Streptomyces coelicolor (strain ATCC BAA-471 / A3(2) / M145) protein is Cobalt transport protein CbiM.